Reading from the N-terminus, the 198-residue chain is Ribonuclease HII (198 aa).

The RNase H type-2 domain occupies 3–198; it reads FLEGGVDEAG…SWRTLRGESP (196 aa). A divalent metal cation is bound by residues aspartate 9, glutamate 10, and aspartate 104.

This sequence belongs to the RNase HII family. Mn(2+) is required as a cofactor. Requires Mg(2+) as cofactor.

It localises to the cytoplasm. It catalyses the reaction Endonucleolytic cleavage to 5'-phosphomonoester.. In terms of biological role, endonuclease that specifically degrades the RNA of RNA-DNA hybrids. This is Ribonuclease HII from Pyrobaculum neutrophilum (strain DSM 2338 / JCM 9278 / NBRC 100436 / V24Sta) (Thermoproteus neutrophilus).